A 290-amino-acid chain; its full sequence is ATP synthase gamma chain (290 aa).

The protein belongs to the ATPase gamma chain family. F-type ATPases have 2 components, CF(1) - the catalytic core - and CF(0) - the membrane proton channel. CF(1) has five subunits: alpha(3), beta(3), gamma(1), delta(1), epsilon(1). CF(0) has three main subunits: a, b and c.

The protein localises to the cell inner membrane. Its function is as follows. Produces ATP from ADP in the presence of a proton gradient across the membrane. The gamma chain is believed to be important in regulating ATPase activity and the flow of protons through the CF(0) complex. This chain is ATP synthase gamma chain, found in Paracoccus denitrificans (strain Pd 1222).